A 440-amino-acid polypeptide reads, in one-letter code: MEIDSEKIHERKQSDYNSLDERFEIQKEMYRGQQYSQIYFARLHLMRTLLYSLAPTWKSHLPVCKVLGLEKGKECIIVGTLFKHMKLKPCVLDEYSKERSVTPLVKPHNFMHPDDNLILEDESGRVKLAGSALSPAIYVTGVVVALHGKETNAGEFFVEDVLEAGLPPQIERPIDLQEDKYVVLLSGLCIGSKSANPLQFQLLVDHITGHLGDEEEQGLAAQIVHVVIAGNSFEFPRKLINGQNLASKDQSTLYEPIKELDIMLSQIAAGVSVDIMPGTNDPANFALPQQPLNRCLFPGSSPYNTFRSCTNPHSFDVDNIRFLGTSGQNIDDLGKYSEAKSKLDFVERTLRWRHLAPTAPNTLGCYPFTDRDPFLIETCPHVYFVGNQDKYDNRLIKGSEGQLVRLICIPKFCETGIAVAVNLRNLECHTLSFSTQINQS.

This sequence belongs to the DNA polymerase delta/II small subunit family. As to quaternary structure, heterodimer with subunits of 125 kDa and 50 kDa.

The protein localises to the nucleus. The enzyme catalyses DNA(n) + a 2'-deoxyribonucleoside 5'-triphosphate = DNA(n+1) + diphosphate. The function of the small subunit is not yet clear. This chain is DNA polymerase delta small subunit (POLD2), found in Arabidopsis thaliana (Mouse-ear cress).